Reading from the N-terminus, the 61-residue chain is Protein translocase subunit SecE (61 aa).

A helical membrane pass occupies residues 38 to 58 (GIGMILIGTIGMIIRIIGYLV).

The protein belongs to the SecE/SEC61-gamma family. As to quaternary structure, component of the Sec protein translocase complex. Heterotrimer consisting of SecY (alpha), SecG (beta) and SecE (gamma) subunits. The heterotrimers can form oligomers, although 1 heterotrimer is thought to be able to translocate proteins. Interacts with the ribosome. May interact with SecDF, and other proteins may be involved.

The protein resides in the cell membrane. Functionally, essential subunit of the Sec protein translocation channel SecYEG. Clamps together the 2 halves of SecY. May contact the channel plug during translocation. This chain is Protein translocase subunit SecE, found in Thermococcus kodakarensis (strain ATCC BAA-918 / JCM 12380 / KOD1) (Pyrococcus kodakaraensis (strain KOD1)).